The primary structure comprises 190 residues: Putative manganese efflux pump MntP (190 aa).

6 helical membrane-spanning segments follow: residues 3–23 (PISLLFLALAMSTDAFAAALG), 41–61 (LIFGAIETITPVIGWGIGQVA), 69–89 (DHWIAFTLLLVLGLHMIYNGI), 105–125 (FWILAVTAFATSIDALAVGVG), 133–153 (IVVAALAIGLATTVMVTIGVM), and 168–188 (IIGGIVLIVVGATILYEHLSA).

Belongs to the MntP (TC 9.B.29) family.

The protein resides in the cell inner membrane. Probably functions as a manganese efflux pump. This chain is Putative manganese efflux pump MntP, found in Pseudomonas syringae pv. syringae (strain B728a).